The primary structure comprises 264 residues: S-adenosylmethionine decarboxylase proenzyme (264 aa).

Ser-112 functions as the Schiff-base intermediate with substrate; via pyruvic acid in the catalytic mechanism. Ser-112 is modified (pyruvic acid (Ser); by autocatalysis). The active-site Proton acceptor; for processing activity is the His-117. Cys-140 functions as the Proton donor; for catalytic activity in the catalytic mechanism.

This sequence belongs to the prokaryotic AdoMetDC family. Type 2 subfamily. Heterooctamer of four alpha and four beta chains arranged as a tetramer of alpha/beta heterodimers. Pyruvate serves as cofactor. In terms of processing, is synthesized initially as an inactive proenzyme. Formation of the active enzyme involves a self-maturation process in which the active site pyruvoyl group is generated from an internal serine residue via an autocatalytic post-translational modification. Two non-identical subunits are generated from the proenzyme in this reaction, and the pyruvate is formed at the N-terminus of the alpha chain, which is derived from the carboxyl end of the proenzyme. The post-translation cleavage follows an unusual pathway, termed non-hydrolytic serinolysis, in which the side chain hydroxyl group of the serine supplies its oxygen atom to form the C-terminus of the beta chain, while the remainder of the serine residue undergoes an oxidative deamination to produce ammonia and the pyruvoyl group blocking the N-terminus of the alpha chain.

It carries out the reaction S-adenosyl-L-methionine + H(+) = S-adenosyl 3-(methylsulfanyl)propylamine + CO2. The protein operates within amine and polyamine biosynthesis; S-adenosylmethioninamine biosynthesis; S-adenosylmethioninamine from S-adenosyl-L-methionine: step 1/1. Catalyzes the decarboxylation of S-adenosylmethionine to S-adenosylmethioninamine (dcAdoMet), the propylamine donor required for the synthesis of the polyamines spermine and spermidine from the diamine putrescine. In Shigella dysenteriae serotype 1 (strain Sd197), this protein is S-adenosylmethionine decarboxylase proenzyme.